We begin with the raw amino-acid sequence, 94 residues long: Selenoprotein K (94 aa).

The chain crosses the membrane as a helical span at residues 20 to 42 (LSFLTDFFWGAVEFIGLFFQTLV). The disordered stretch occupies residues 48-94 (KDGNNSASSRFSDGRGPPGFPGRRRMGRINHGAGPTPPPMGGGGUGR). A compositionally biased stretch (polar residues) spans 49–58 (DGNNSASSRF). U92 is a non-standard amino acid (selenocysteine).

The protein belongs to the selenoprotein K family.

It is found in the endoplasmic reticulum membrane. The protein resides in the cell membrane. In terms of biological role, required for Ca(2+) flux in immune cells and plays a role in T-cell proliferation and in T-cell and neutrophil migration. Involved in endoplasmic reticulum-associated degradation (ERAD) of soluble glycosylated proteins. Required for cell surface expression of CD36 and involved in macrophage uptake of low-density lipoprotein and in foam cell formation. Required for palmitoylation. This is Selenoprotein K (selenok) from Danio rerio (Zebrafish).